The following is a 337-amino-acid chain: Ornithine carbamoyltransferase (337 aa).

Carbamoyl phosphate is bound by residues serine 56–threonine 59, glutamine 83, arginine 107, and histidine 134–glutamine 137. L-ornithine contacts are provided by residues asparagine 168, aspartate 232, and serine 236–methionine 237. Residues cysteine 274–leucine 275 and arginine 320 each bind carbamoyl phosphate.

The protein belongs to the aspartate/ornithine carbamoyltransferase superfamily. OTCase family.

It is found in the cytoplasm. It catalyses the reaction carbamoyl phosphate + L-ornithine = L-citrulline + phosphate + H(+). It functions in the pathway amino-acid biosynthesis; L-arginine biosynthesis; L-arginine from L-ornithine and carbamoyl phosphate: step 1/3. Functionally, reversibly catalyzes the transfer of the carbamoyl group from carbamoyl phosphate (CP) to the N(epsilon) atom of ornithine (ORN) to produce L-citrulline. The chain is Ornithine carbamoyltransferase from Shigella flexneri serotype 5b (strain 8401).